A 185-amino-acid chain; its full sequence is Ribosome-recycling factor (185 aa).

Positions 128–158 (VRNTRQDANNKVKKLEKDKEISEDESKKAQE) are disordered.

This sequence belongs to the RRF family.

It localises to the cytoplasm. Responsible for the release of ribosomes from messenger RNA at the termination of protein biosynthesis. May increase the efficiency of translation by recycling ribosomes from one round of translation to another. The protein is Ribosome-recycling factor of Helicobacter pylori (strain J99 / ATCC 700824) (Campylobacter pylori J99).